We begin with the raw amino-acid sequence, 542 residues long: CTP synthase (542 aa).

Positions 1 to 265 (MARYVFITGG…DDEVLAAFGI (265 aa)) are amidoligase domain. A CTP-binding site is contributed by S13. Residue S13 coordinates UTP. ATP is bound by residues 14-19 (SLGKGI) and D71. Positions 71 and 139 each coordinate Mg(2+). CTP is bound by residues 146–148 (DIE), 186–191 (KTKPTQ), and K222. UTP is bound by residues 186-191 (KTKPTQ) and K222. The Glutamine amidotransferase type-1 domain maps to 291-541 (TIAIVGKYTG…IEAATEQSRL (251 aa)). G353 is a binding site for L-glutamine. The active-site Nucleophile; for glutamine hydrolysis is the C380. Residues 381–384 (FGMQ), E404, and R469 each bind L-glutamine. Active-site residues include H514 and E516.

The protein belongs to the CTP synthase family. Homotetramer.

It carries out the reaction UTP + L-glutamine + ATP + H2O = CTP + L-glutamate + ADP + phosphate + 2 H(+). The enzyme catalyses L-glutamine + H2O = L-glutamate + NH4(+). It catalyses the reaction UTP + NH4(+) + ATP = CTP + ADP + phosphate + 2 H(+). Its pathway is pyrimidine metabolism; CTP biosynthesis via de novo pathway; CTP from UDP: step 2/2. Its activity is regulated as follows. Allosterically activated by GTP, when glutamine is the substrate; GTP has no effect on the reaction when ammonia is the substrate. The allosteric effector GTP functions by stabilizing the protein conformation that binds the tetrahedral intermediate(s) formed during glutamine hydrolysis. Inhibited by the product CTP, via allosteric rather than competitive inhibition. Its function is as follows. Catalyzes the ATP-dependent amination of UTP to CTP with either L-glutamine or ammonia as the source of nitrogen. Regulates intracellular CTP levels through interactions with the four ribonucleotide triphosphates. The protein is CTP synthase of Rhizobium etli (strain ATCC 51251 / DSM 11541 / JCM 21823 / NBRC 15573 / CFN 42).